The following is a 274-amino-acid chain: 2,3,4,5-tetrahydropyridine-2,6-dicarboxylate N-succinyltransferase (274 aa).

2 residues coordinate substrate: Arg103 and Asp140.

Belongs to the transferase hexapeptide repeat family. As to quaternary structure, homotrimer.

It is found in the cytoplasm. The catalysed reaction is (S)-2,3,4,5-tetrahydrodipicolinate + succinyl-CoA + H2O = (S)-2-succinylamino-6-oxoheptanedioate + CoA. It functions in the pathway amino-acid biosynthesis; L-lysine biosynthesis via DAP pathway; LL-2,6-diaminopimelate from (S)-tetrahydrodipicolinate (succinylase route): step 1/3. The polypeptide is 2,3,4,5-tetrahydropyridine-2,6-dicarboxylate N-succinyltransferase (Actinobacillus pleuropneumoniae serotype 5b (strain L20)).